Consider the following 165-residue polypeptide: Crossover junction endodeoxyribonuclease RuvC (165 aa).

Active-site residues include aspartate 8, glutamate 69, and histidine 141. 3 residues coordinate Mg(2+): aspartate 8, glutamate 69, and histidine 141.

Belongs to the RuvC family. As to quaternary structure, homodimer which binds Holliday junction (HJ) DNA. The HJ becomes 2-fold symmetrical on binding to RuvC with unstacked arms; it has a different conformation from HJ DNA in complex with RuvA. In the full resolvosome a probable DNA-RuvA(4)-RuvB(12)-RuvC(2) complex forms which resolves the HJ. Requires Mg(2+) as cofactor.

The protein resides in the cytoplasm. It carries out the reaction Endonucleolytic cleavage at a junction such as a reciprocal single-stranded crossover between two homologous DNA duplexes (Holliday junction).. Its function is as follows. The RuvA-RuvB-RuvC complex processes Holliday junction (HJ) DNA during genetic recombination and DNA repair. Endonuclease that resolves HJ intermediates. Cleaves cruciform DNA by making single-stranded nicks across the HJ at symmetrical positions within the homologous arms, yielding a 5'-phosphate and a 3'-hydroxyl group; requires a central core of homology in the junction. The consensus cleavage sequence is 5'-(A/T)TT(C/G)-3'. Cleavage occurs on the 3'-side of the TT dinucleotide at the point of strand exchange. HJ branch migration catalyzed by RuvA-RuvB allows RuvC to scan DNA until it finds its consensus sequence, where it cleaves and resolves the cruciform DNA. This chain is Crossover junction endodeoxyribonuclease RuvC, found in Wolbachia pipientis subsp. Culex pipiens (strain wPip).